A 177-amino-acid polypeptide reads, in one-letter code: uncharacterized protein (177 aa).

4 consecutive transmembrane segments (helical) span residues 4–24 (IIILILLLMGTLLGLKRGFIL), 33–53 (ILSIAFAALFYKNVAPHLHWI), 80–100 (IAFIVLFIIAKILLRIIGSFL), and 115–135 (MLGAVLGFLEVYLFTFVLLYV).

The protein localises to the cell membrane. This is an uncharacterized protein from Bacillus subtilis (strain 168).